Reading from the N-terminus, the 130-residue chain is Small ribosomal subunit protein uS9 (130 aa).

The segment covering 99 to 110 (KKAGFLTRDPRM) has biased composition (basic and acidic residues). Residues 99–130 (KKAGFLTRDPRMKERKKYGLKKARRAPQFSKR) are disordered. Positions 111–130 (KERKKYGLKKARRAPQFSKR) are enriched in basic residues.

The protein belongs to the universal ribosomal protein uS9 family.

This chain is Small ribosomal subunit protein uS9, found in Clostridium botulinum (strain Eklund 17B / Type B).